We begin with the raw amino-acid sequence, 748 residues long: Polyribonucleotide nucleotidyltransferase (748 aa).

Positions 522 and 528 each coordinate Mg(2+). The 60-residue stretch at 588-647 (PRVTTIRVPVDKIGEVIGPKGKIINAITEETGAQISIEDDGTVFVGATDGPSAQAAIDRI) folds into the KH domain. One can recognise an S1 motif domain in the interval 659–728 (GERFLGTVVK…KRGKISLVLV (70 aa)).

It belongs to the polyribonucleotide nucleotidyltransferase family. Requires Mg(2+) as cofactor.

The protein localises to the cytoplasm. It carries out the reaction RNA(n+1) + phosphate = RNA(n) + a ribonucleoside 5'-diphosphate. Involved in mRNA degradation. Catalyzes the phosphorolysis of single-stranded polyribonucleotides processively in the 3'- to 5'-direction. This chain is Polyribonucleotide nucleotidyltransferase, found in Mycobacterium avium (strain 104).